The chain runs to 152 residues: Superoxide dismutase [Cu-Zn] 2 (152 aa).

N-linked (GlcNAc...) asparagine glycans are attached at residues Asn9 and Asn33. Residues His45, His47, and His62 each coordinate Cu cation. A disulfide bridge links Cys56 with Cys145. Positions 62, 70, 79, and 82 each coordinate Zn(2+). Residue Asn85 is glycosylated (N-linked (GlcNAc...) asparagine). Residue His119 coordinates Cu cation.

The protein belongs to the Cu-Zn superoxide dismutase family. Requires Cu cation as cofactor. It depends on Zn(2+) as a cofactor. Expressed in fruits, leaves and pollen grains.

The protein localises to the cytoplasm. The protein resides in the endoplasmic reticulum. The enzyme catalyses 2 superoxide + 2 H(+) = H2O2 + O2. Its activity is regulated as follows. Inhibited by KCN and H(2)O(2). Destroys radicals which are normally produced within the cells and which are toxic to biological systems. Probably involved in the protection against oxidative stress during pollen development. The polypeptide is Superoxide dismutase [Cu-Zn] 2 (OLE5) (Olea europaea (Common olive)).